The following is a 398-amino-acid chain: Phosphoglycerate kinase (398 aa).

Residues 23–25 (DFN), arginine 38, 61–64 (HMGK), arginine 122, and arginine 155 contribute to the substrate site. ATP-binding positions include lysine 206, glycine 297, glutamate 328, and 354–357 (GGDS).

This sequence belongs to the phosphoglycerate kinase family. Monomer.

Its subcellular location is the cytoplasm. It catalyses the reaction (2R)-3-phosphoglycerate + ATP = (2R)-3-phospho-glyceroyl phosphate + ADP. Its pathway is carbohydrate degradation; glycolysis; pyruvate from D-glyceraldehyde 3-phosphate: step 2/5. The sequence is that of Phosphoglycerate kinase from Clostridium botulinum (strain Hall / ATCC 3502 / NCTC 13319 / Type A).